Consider the following 77-residue polypeptide: Acyl carrier protein (77 aa).

Residues 2–77 (SNIEERVKKI…AAIDYVSKNQ (76 aa)) form the Carrier domain. At Ser-37 the chain carries O-(pantetheine 4'-phosphoryl)serine.

It belongs to the acyl carrier protein (ACP) family. Post-translationally, 4'-phosphopantetheine is transferred from CoA to a specific serine of apo-ACP by AcpS. This modification is essential for activity because fatty acids are bound in thioester linkage to the sulfhydryl of the prosthetic group.

Its subcellular location is the cytoplasm. Its pathway is lipid metabolism; fatty acid biosynthesis. In terms of biological role, carrier of the growing fatty acid chain in fatty acid biosynthesis. The chain is Acyl carrier protein from Shewanella oneidensis (strain ATCC 700550 / JCM 31522 / CIP 106686 / LMG 19005 / NCIMB 14063 / MR-1).